Consider the following 77-residue polypeptide: Putative defensin-like protein 118 (77 aa).

The first 25 residues, 1–25 (MSKSTILAIFMIVLVLGKVTKETQG), serve as a signal peptide directing secretion. Disulfide bonds link cysteine 29/cysteine 75, cysteine 39/cysteine 58, cysteine 44/cysteine 69, and cysteine 48/cysteine 71.

Belongs to the DEFL family.

It localises to the secreted. This Arabidopsis thaliana (Mouse-ear cress) protein is Putative defensin-like protein 118 (LCR52).